Consider the following 567-residue polypeptide: 25S rRNA (cytosine-C(5))-methyltransferase NSUN5 (567 aa).

The segment covering 1–17 has biased composition (basic residues); the sequence is MVARRNKPKAPLVKHRF. The disordered stretch occupies residues 1–88; that stretch reads MVARRNKPKA…KTPPATKQKF (88 aa). S-adenosyl-L-methionine is bound by residues 312 to 318, Glu-336, Asp-363, and Asp-383; that span reads CSAPGNK. Catalysis depends on Cys-444, which acts as the Nucleophile.

Belongs to the class I-like SAM-binding methyltransferase superfamily. RsmB/NOP family.

It catalyses the reaction a cytidine in 25S rRNA + S-adenosyl-L-methionine = a 5-methylcytidine in 25S rRNA + S-adenosyl-L-homocysteine + H(+). Its function is as follows. S-adenosyl-L-methionine-dependent methyltransferase that specifically methylates the C(5) position of cytosine 2268 (m5C2268) in 25S rRNA. The chain is 25S rRNA (cytosine-C(5))-methyltransferase NSUN5 from Arabidopsis thaliana (Mouse-ear cress).